We begin with the raw amino-acid sequence, 401 residues long: Type 3 secretion system translocon protein SctE (401 aa).

Residues 129–160 (IQRLHEQNMKKIEENQEKIKETEENAKQVKKS) are a coiled coil. Transmembrane regions (helical) follow at residues 166 to 186 (IFGW…VASG) and 225 to 245 (LGPI…VMTF). Positions 345-379 (LALNKADMAALQSIIDRLKEELSHLSESHRQVMEL) form a coiled coil.

The protein belongs to the SctE/SipB/YopB family. The core secretion machinery of the T3SS is composed of approximately 20 different proteins, including cytoplasmic components, a base, an export apparatus and a needle. This subunit is involved in the formation of a pore, called the translocon, in host membrane. Interacts with YopD/SctB. Together with YopD/SctB, forms a multimeric integral membrane complex with a mass of between 500 and 700 kDa.

The protein localises to the secreted. Its subcellular location is the host membrane. Functionally, component of the type III secretion system (T3SS), also called injectisome, which is used to inject bacterial effector proteins into eukaryotic host cells. YopB/SctE and YopD/SctB are inserted into the host membrane where they form a pore and allow the translocation of effector proteins into the cytosol of target cells. Is an essential virulence determinant. Required for YopE translocation. In terms of biological role, essential for the establishment of Yersinia infections in a mouse model system, but not for the targeting of effector Yops. May modulate the host's immune response at a distance from the site of infection. The chain is Type 3 secretion system translocon protein SctE from Yersinia enterocolitica.